The primary structure comprises 215 residues: RNA pyrophosphohydrolase (215 aa).

The 144-residue stretch at 6-149 (GFRPNVGIIL…KRDVYQLALT (144 aa)) folds into the Nudix hydrolase domain. The short motif at 38–59 (GGIKYGETPMQAMYRELHEETG) is the Nudix box element.

The protein belongs to the Nudix hydrolase family. RppH subfamily. Requires a divalent metal cation as cofactor.

In terms of biological role, accelerates the degradation of transcripts by removing pyrophosphate from the 5'-end of triphosphorylated RNA, leading to a more labile monophosphorylated state that can stimulate subsequent ribonuclease cleavage. The polypeptide is RNA pyrophosphohydrolase (Burkholderia multivorans (strain ATCC 17616 / 249)).